Consider the following 236-residue polypeptide: Probable metal transport system ATP-binding protein TC_0697 (236 aa).

An ABC transporter domain is found at 5 to 236; sequence LILENVSFRY…FCCNTFGKCS (232 aa). Position 39-46 (39-46) interacts with ATP; sequence GPNGGGKT.

It belongs to the ABC transporter superfamily.

It localises to the cell inner membrane. In terms of biological role, part of an ATP-driven transport system TC_0696/TC_0697/TC_0698 for a metal. Probably responsible for energy coupling to the transport system. The chain is Probable metal transport system ATP-binding protein TC_0697 from Chlamydia muridarum (strain MoPn / Nigg).